A 287-amino-acid polypeptide reads, in one-letter code: MTAQYIDGKAIAAQLRAEIKAEVASLREQGIVPKLAVILVGDDPASVVYARSKEKAAANLGIAFELFTLPGDTTEAALLALIERLNADAAVHGIMVELPLPKQISKEKVLEAIHPLKDVDGVHPLNRGYLMAGQPGLVPATPMSCMELLARSGVELAGKRVVIIGRGETVGKPLFFLLLRRNATVTVCHTRTKDLAAEVRRAEIVIAAAGKAGLVTGEMIAPDAVVIDAGINEGEDGNIVGDVKTAEAAERASLISPVPGGVGACTTALLFRNVLFGLKLQGGMAHE.

Residues 165-167 (GRG), threonine 190, and isoleucine 231 contribute to the NADP(+) site.

The protein belongs to the tetrahydrofolate dehydrogenase/cyclohydrolase family. Homodimer.

The enzyme catalyses (6R)-5,10-methylene-5,6,7,8-tetrahydrofolate + NADP(+) = (6R)-5,10-methenyltetrahydrofolate + NADPH. It carries out the reaction (6R)-5,10-methenyltetrahydrofolate + H2O = (6R)-10-formyltetrahydrofolate + H(+). It functions in the pathway one-carbon metabolism; tetrahydrofolate interconversion. Functionally, catalyzes the oxidation of 5,10-methylenetetrahydrofolate to 5,10-methenyltetrahydrofolate and then the hydrolysis of 5,10-methenyltetrahydrofolate to 10-formyltetrahydrofolate. This is Bifunctional protein FolD from Heliobacterium modesticaldum (strain ATCC 51547 / Ice1).